The sequence spans 101 residues: Small ribosomal subunit protein uS14 (101 aa).

Belongs to the universal ribosomal protein uS14 family. In terms of assembly, part of the 30S ribosomal subunit. Contacts proteins S3 and S10.

Functionally, binds 16S rRNA, required for the assembly of 30S particles and may also be responsible for determining the conformation of the 16S rRNA at the A site. The protein is Small ribosomal subunit protein uS14 of Sphingopyxis alaskensis (strain DSM 13593 / LMG 18877 / RB2256) (Sphingomonas alaskensis).